The primary structure comprises 416 residues: Squalene synthase (416 aa).

Residues Arg-52 and Arg-77 each contribute to the NADP(+) site. Mg(2+) contacts are provided by Asp-80, Glu-83, and Asp-84. Arg-218 is an NADP(+) binding site. Residues 284–304 form a helical membrane-spanning segment; that stretch reads SVFNFCAIPQVMAIATLAACY. Positions 315 and 317 each coordinate NADP(+). A helical transmembrane segment spans residues 384–404; that stretch reads PIYLSFIMLLAALSWQYLSTL.

The protein belongs to the phytoene/squalene synthase family. Mg(2+) serves as cofactor.

The protein localises to the endoplasmic reticulum membrane. The catalysed reaction is 2 (2E,6E)-farnesyl diphosphate + NADPH + H(+) = squalene + 2 diphosphate + NADP(+). The enzyme catalyses 2 (2E,6E)-farnesyl diphosphate + NADH + H(+) = squalene + 2 diphosphate + NAD(+). It catalyses the reaction presqualene diphosphate + NADH + H(+) = squalene + diphosphate + NAD(+). It carries out the reaction presqualene diphosphate + NADPH + H(+) = squalene + diphosphate + NADP(+). The catalysed reaction is 2 (2E,6E)-farnesyl diphosphate = presqualene diphosphate + diphosphate. It participates in terpene metabolism; lanosterol biosynthesis; lanosterol from farnesyl diphosphate: step 1/3. Functionally, catalyzes the condensation of 2 farnesyl pyrophosphate (FPP) moieties to form squalene. Proceeds in two distinct steps. In the first half-reaction, two molecules of FPP react to form the stable presqualene diphosphate intermediate (PSQPP), with concomitant release of a proton and a molecule of inorganic diphosphate. In the second half-reaction, PSQPP undergoes heterolysis, isomerization, and reduction with NADPH or NADH to form squalene. It is the first committed enzyme of the sterol biosynthesis pathway. In Rattus norvegicus (Rat), this protein is Squalene synthase (Fdft1).